Reading from the N-terminus, the 525-residue chain is Packaging protein UL32 homolog (525 aa).

Residues 1-12 are compositionally biased toward polar residues; it reads MAHKVTSANEPN. The segment at 1–20 is disordered; it reads MAHKVTSANEPNPLTGKRLS. Residues Cys95, Cys98, His173, Cys179, Cys255, Cys256, Cys357, Cys360, His427, Cys434, Cys473, and His510 each contribute to the Zn(2+) site. Zinc finger regions lie at residues 95–179, 255–510, and 357–434; these read CRVC…ICRC, CCHL…LRIH, and CPLC…DPLC.

The protein belongs to the herpesviridae UL32 protein family.

It localises to the host cytoplasm. Its subcellular location is the host nucleus. Its function is as follows. Plays a role in efficient localization of neo-synthesized capsids to nuclear replication compartments, thereby controlling cleavage and packaging of virus genomic DNA. The chain is Packaging protein UL32 homolog from Epstein-Barr virus (strain B95-8) (HHV-4).